We begin with the raw amino-acid sequence, 254 residues long: 3-deoxy-manno-octulosonate cytidylyltransferase (254 aa).

This sequence belongs to the KdsB family.

The protein resides in the cytoplasm. The catalysed reaction is 3-deoxy-alpha-D-manno-oct-2-ulosonate + CTP = CMP-3-deoxy-beta-D-manno-octulosonate + diphosphate. Its pathway is nucleotide-sugar biosynthesis; CMP-3-deoxy-D-manno-octulosonate biosynthesis; CMP-3-deoxy-D-manno-octulosonate from 3-deoxy-D-manno-octulosonate and CTP: step 1/1. The protein operates within bacterial outer membrane biogenesis; lipopolysaccharide biosynthesis. Activates KDO (a required 8-carbon sugar) for incorporation into bacterial lipopolysaccharide in Gram-negative bacteria. This Tolumonas auensis (strain DSM 9187 / NBRC 110442 / TA 4) protein is 3-deoxy-manno-octulosonate cytidylyltransferase.